Reading from the N-terminus, the 160-residue chain is SsrA-binding protein (160 aa).

A disordered region spans residues methionine 1–arginine 23.

This sequence belongs to the SmpB family.

Its subcellular location is the cytoplasm. In terms of biological role, required for rescue of stalled ribosomes mediated by trans-translation. Binds to transfer-messenger RNA (tmRNA), required for stable association of tmRNA with ribosomes. tmRNA and SmpB together mimic tRNA shape, replacing the anticodon stem-loop with SmpB. tmRNA is encoded by the ssrA gene; the 2 termini fold to resemble tRNA(Ala) and it encodes a 'tag peptide', a short internal open reading frame. During trans-translation Ala-aminoacylated tmRNA acts like a tRNA, entering the A-site of stalled ribosomes, displacing the stalled mRNA. The ribosome then switches to translate the ORF on the tmRNA; the nascent peptide is terminated with the 'tag peptide' encoded by the tmRNA and targeted for degradation. The ribosome is freed to recommence translation, which seems to be the essential function of trans-translation. The chain is SsrA-binding protein from Thermobifida fusca (strain YX).